The primary structure comprises 312 residues: Olfactory receptor 1493 (312 aa).

Residues 1–23 are Extracellular-facing; it reads MNNKTVITHFLLLGLPIPPEHQQ. An N-linked (GlcNAc...) asparagine glycan is attached at Asn3. Residues 24 to 48 traverse the membrane as a helical segment; it reads LFFALFLIMYLTTFLGNLLIVVLVQ. Residues 49 to 55 are Cytoplasmic-facing; it reads LDSHLHT. The chain crosses the membrane as a helical span at residues 56 to 77; that stretch reads PMYLFLSNLSFSDLCFSSVTML. At 78–98 the chain is on the extracellular side; that stretch reads KLLQNIQSQVPSISYAGCLTQ. Cys95 and Cys187 are joined by a disulfide. A helical membrane pass occupies residues 99–118; sequence IFFFLLFGYLGNFLLVAMAY. The Cytoplasmic portion of the chain corresponds to 119–137; the sequence is DRYVAICFPLHYTNIMSHK. Residues 138–156 form a helical membrane-spanning segment; sequence LCTCLLLVFWIMTSSHAMM. At 157 to 194 the chain is on the extracellular side; it reads HTLLAARLSFCENNVLLNFFCDLFVLLKLACSDTYVNE. Residues 195 to 217 form a helical membrane-spanning segment; sequence LMIHIMGVIIIVIPFVLIVISYA. Residues 218–234 are Cytoplasmic-facing; the sequence is KIISSILKVPSTQSIHK. A helical transmembrane segment spans residues 235–258; sequence VFSTCGSHLSVVSLFYGTIIGLYL. At 259-270 the chain is on the extracellular side; that stretch reads CPSGDNFSLKGS. A helical membrane pass occupies residues 271 to 290; the sequence is AMAMMYTVVTPMLNPFIYSL. Topologically, residues 291–312 are cytoplasmic; it reads RNRDMKQALIRVTCSKKISLPW.

It belongs to the G-protein coupled receptor 1 family. As to expression, olfactory epithelium.

Its subcellular location is the cell membrane. In terms of biological role, odorant receptor. In Rattus norvegicus (Rat), this protein is Olfactory receptor 1493 (Olr1493).